The sequence spans 90 residues: Protein AF1q (90 aa).

The short motif at Leu24–Leu32 is the Nuclear export signal element. Phosphoserine is present on Ser84.

It belongs to the MLLT11 family. As to quaternary structure, interacts with HSPA8 and LAMP2 isoform A; the interaction may target MLLT11 for degradation via chaperone-mediated autophagy. Interacts with TCF7. Ubiquitinated, leading to degradation.

Its subcellular location is the nucleus. The protein resides in the cytoplasm. It localises to the cytoskeleton. It is found in the microtubule organizing center. The protein localises to the centrosome. Its function is as follows. Cofactor for the transcription factor TCF7. Involved in regulation of lymphoid development by driving multipotent hematopoietic progenitor cells towards a T-cell fate. This Pongo abelii (Sumatran orangutan) protein is Protein AF1q (MLLT11).